A 311-amino-acid chain; its full sequence is Retinol dehydrogenase 8 (311 aa).

9–18 is a binding site for NADP(+); sequence LISGCSSGIG. The next 3 helical transmembrane spans lie at 86 to 106, 137 to 157, and 169 to 189; these read VLVN…SLAA, IVVI…VYAA, and LAIQ…GPVV. Ser-142 contacts substrate. Catalysis depends on Tyr-155, which acts as the Proton acceptor.

It belongs to the short-chain dehydrogenases/reductases (SDR) family. Detected in photoreceptor outer segments in the retina (at protein level).

Its subcellular location is the membrane. The catalysed reaction is all-trans-retinol + NADP(+) = all-trans-retinal + NADPH + H(+). In terms of biological role, retinol dehydrogenase with a clear preference for NADP. Converts all-trans-retinal to all-trans-retinol. May play a role in the regeneration of visual pigment at high light intensity. In Homo sapiens (Human), this protein is Retinol dehydrogenase 8 (RDH8).